Reading from the N-terminus, the 650-residue chain is L-aspartate N-monooxygenase (nitrosuccinate-forming) (650 aa).

Belongs to the nitrosuccinic acid synthase family. It depends on FAD as a cofactor.

It catalyses the reaction L-aspartate + 3 NADPH + 3 O2 + 2 H(+) = 2-nitrobutanedioate + 3 NADP(+) + 4 H2O. Functionally, involved in the biosynthesis of desferrioxamine derivatives which have iron-binding properties and may act as siderophores. Catalyzes the iterative oxidation of L-aspartic acid to nitrosuccinic acid (2-nitrobutanedioate) via N-hydroxyaspartic acid and nitrososuccinic acid. This is L-aspartate N-monooxygenase (nitrosuccinate-forming) from Streptomyces davaonensis (strain DSM 101723 / JCM 4913 / KCC S-0913 / 768).